Consider the following 133-residue polypeptide: Profilin-1 (133 aa).

This sequence belongs to the profilin family. As to quaternary structure, occurs in many kinds of cells as a complex with monomeric actin in a 1:1 ratio. In terms of tissue distribution, ubiquitous.

The protein localises to the cytoplasm. Its subcellular location is the cytoskeleton. Binds to actin and affects the structure of the cytoskeleton. At high concentrations, profilin prevents the polymerization of actin, whereas it enhances it at low concentrations. By binding to PIP2, it inhibits the formation of IP3 and DG. This chain is Profilin-1 (PRO1), found in Solanum lycopersicum (Tomato).